The chain runs to 114 residues: Large ribosomal subunit protein bL19 (114 aa).

It belongs to the bacterial ribosomal protein bL19 family.

In terms of biological role, this protein is located at the 30S-50S ribosomal subunit interface and may play a role in the structure and function of the aminoacyl-tRNA binding site. The sequence is that of Large ribosomal subunit protein bL19 from Lysinibacillus sphaericus (strain C3-41).